The primary structure comprises 91 residues: PqqA binding protein (91 aa).

Belongs to the PqqD family. Monomer. Interacts with PqqE.

It participates in cofactor biosynthesis; pyrroloquinoline quinone biosynthesis. In terms of biological role, functions as a PqqA binding protein and presents PqqA to PqqE, in the pyrroloquinoline quinone (PQQ) biosynthetic pathway. In Pseudomonas putida (strain W619), this protein is PqqA binding protein.